The sequence spans 516 residues: Importin subunit alpha-B (516 aa).

Basic and acidic residues predominate over residues 1 to 29 (MQRSKQETRKSQYKKSIDSDESRRKREEA). The interval 1–54 (MQRSKQETRKSQYKKSIDSDESRRKREEASLSIRKNKREESLLKKRTQAVPGST) is disordered. The IBB domain occupies 1–55 (MQRSKQETRKSQYKKSIDSDESRRKREEASLSIRKNKREESLLKKRTQAVPGSTP). ARM repeat units follow at residues 55–96 (PVKV…KLLS), 100–140 (SPPI…NIAS), 143–182 (PEQTRVVIENGAIQVFVLLLSSPHDDVREQAVWALGNIAG), 185–227 (HYCR…NFCR), 229–268 (KPQPPFEIVRASLPVLAKLIYYQDEEVLIDACWALSYLSD), 271–310 (NERIQEVIDAKVCRKMVELLGHPTIAVQTPALRTIGNIVT), 313–352 (DNQTQIVLSVQALSHLLNLLQSPKRAIRKEACWTISNITA), 355–394 (KNQIQQVIDANIIPSLVYLLANAEFEIQKEAAWAISNATS), and 398–437 (PQQIHFLVSQGCVKPLCDLLKVSDPRIINVALEGIENILV). Residues 490 to 516 (EQEDEGDLMPEGSSFSFSNQTNSNFNL) are disordered. A compositionally biased stretch (low complexity) spans 502-516 (SSFSFSNQTNSNFNL).

It belongs to the importin alpha family. In terms of assembly, forms a complex with tnpo/importin subunit beta.

The protein localises to the cytoplasm. Its subcellular location is the nucleus envelope. Functionally, functions in nuclear protein import via a substrate-importin alpha-beta transport complex that passes though the nuclear pore complexes (NPC). Binds specifically and directly to substrates containing either a simple or bipartite NLS motif. This is Importin subunit alpha-B from Dictyostelium discoideum (Social amoeba).